The primary structure comprises 107 residues: Anti-adapter protein IraM (107 aa).

This sequence belongs to the IraM/RssC family.

It is found in the cytoplasm. Its function is as follows. Inhibits RpoS proteolysis by regulating RssB activity, thereby increasing the stability of the sigma stress factor RpoS during magnesium starvation. The polypeptide is Anti-adapter protein IraM (Escherichia coli (strain 55989 / EAEC)).